Reading from the N-terminus, the 621-residue chain is KIF-binding protein (621 aa).

The disordered stretch occupies residues 51–75 (GPAPEDEDERPEAEDGPGAGDHALG). Positions 54–65 (PEDEDERPEAED) are enriched in acidic residues. Ser-178 is modified (phosphoserine).

It belongs to the KIF-binding protein family. In terms of assembly, interacts with KIF1B; positively regulates KIF1B microtubule motor activity. Interacts with STMN2. As to expression, highly expressed in heart, brain, ovary, testis, spinal cord and all specific brain regions examined. Moderate expressed at intermediate level in all other adult tissues examined, as well as in fetal liver and brain. Not expressed in blood leukocytes.

It is found in the cytoplasm. The protein resides in the cytoskeleton. Its function is as follows. Activator of KIF1B plus-end-directed microtubule motor activity. Required for organization of axonal microtubules, and axonal outgrowth and maintenance during peripheral and central nervous system development. The protein is KIF-binding protein of Homo sapiens (Human).